A 160-amino-acid chain; its full sequence is Protein cornichon homolog 3 (160 aa).

At Met1–Tyr10 the chain is on the cytoplasmic side. A helical transmembrane segment spans residues Met11–Phe31. The Lumenal segment spans residues Asp32 to Tyr72. The chain crosses the membrane as a helical span at residues Ser73–Leu93. Over Asn94–Lys138 the chain is Cytoplasmic. A helical membrane pass occupies residues Leu139–Ser159. Residue Ser160 is a topological domain, lumenal.

This sequence belongs to the cornichon family. In terms of assembly, acts as an auxiliary subunit for AMPA-selective glutamate receptors (AMPARs). Found in a complex with GRIA1, GRIA2, GRIA3, GRIA4, CNIH2, CACNG2, CACNG3, CACNG4, CACNG5, CACNG7 and CACNG8. As to expression, expression is up-regulated in dorsolateral prefrontal cortex of patients with schizophrenia (postmortem brain study).

The protein resides in the postsynaptic cell membrane. In terms of biological role, regulates the trafficking and gating properties of AMPA-selective glutamate receptors (AMPARs). Promotes their targeting to the cell membrane and synapses and modulates their gating properties by regulating their rates of activation, deactivation and desensitization. This is Protein cornichon homolog 3 (CNIH3) from Homo sapiens (Human).